We begin with the raw amino-acid sequence, 89 residues long: Omega-theraphotoxin-Ba1c (89 aa).

The signal sequence occupies residues 1-23; sequence MRSLTLAAVLACSLLLVFHTSAA. A propeptide spanning residues 24–50 is cleaved from the precursor; the sequence is EEHEAQEGYLMNPGDTDTALATVDDER. 3 disulfide bridges follow: Cys54/Cys75, Cys58/Cys81, and Cys67/Cys86.

This sequence belongs to the neurotoxin 12 (Hwtx-2) family. 06 (TXP1) subfamily. In terms of tissue distribution, expressed by the venom gland.

The protein localises to the secreted. Functionally, inhibits voltage-gated calcium channels (Cav) in rat cerebellar granule cells. Has insecticidal activity. This chain is Omega-theraphotoxin-Ba1c, found in Brachypelma albiceps (Mexican golden redrump tarantula).